We begin with the raw amino-acid sequence, 883 residues long: Phosphoenolpyruvate carboxylase (883 aa).

Catalysis depends on residues histidine 138 and lysine 546.

This sequence belongs to the PEPCase type 1 family. The cofactor is Mg(2+).

The catalysed reaction is oxaloacetate + phosphate = phosphoenolpyruvate + hydrogencarbonate. Functionally, forms oxaloacetate, a four-carbon dicarboxylic acid source for the tricarboxylic acid cycle. This is Phosphoenolpyruvate carboxylase from Escherichia coli O7:K1 (strain IAI39 / ExPEC).